We begin with the raw amino-acid sequence, 154 residues long: NADPH-dependent 7-cyano-7-deazaguanine reductase (154 aa).

C52 (thioimide intermediate) is an active-site residue. D59 acts as the Proton donor in catalysis. Residues V74 to S76 and H93 to E94 each bind substrate.

It belongs to the GTP cyclohydrolase I family. QueF type 1 subfamily.

The protein localises to the cytoplasm. The enzyme catalyses 7-aminomethyl-7-carbaguanine + 2 NADP(+) = 7-cyano-7-deazaguanine + 2 NADPH + 3 H(+). The protein operates within tRNA modification; tRNA-queuosine biosynthesis. Functionally, catalyzes the NADPH-dependent reduction of 7-cyano-7-deazaguanine (preQ0) to 7-aminomethyl-7-deazaguanine (preQ1). This Paracoccus denitrificans (strain Pd 1222) protein is NADPH-dependent 7-cyano-7-deazaguanine reductase.